A 346-amino-acid polypeptide reads, in one-letter code: Golgi-associated RAB2 interactor protein 2 (346 aa).

The disordered stretch occupies residues threonine 275 to phenylalanine 346. 2 stretches are compositionally biased toward basic and acidic residues: residues threonine 283 to proline 297 and lysine 334 to phenylalanine 346.

Belongs to the GARIN family. As to quaternary structure, interacts with CALM1.

The protein resides in the cell projection. Its subcellular location is the cilium. It localises to the flagellum. Functionally, seems to play a role in sperm motility. The polypeptide is Golgi-associated RAB2 interactor protein 2 (GARIN2) (Macaca fascicularis (Crab-eating macaque)).